A 175-amino-acid polypeptide reads, in one-letter code: NADH-ubiquinone oxidoreductase chain 6 (175 aa).

The next 5 membrane-spanning stretches (helical) occupy residues methionine 1–serine 21, serine 25–leucine 45, phenylalanine 47–valine 67, alanine 88–leucine 108, and tyrosine 149–methionine 169.

Belongs to the complex I subunit 6 family. Core subunit of respiratory chain NADH dehydrogenase (Complex I) which is composed of 45 different subunits.

The protein resides in the mitochondrion inner membrane. The enzyme catalyses a ubiquinone + NADH + 5 H(+)(in) = a ubiquinol + NAD(+) + 4 H(+)(out). In terms of biological role, core subunit of the mitochondrial membrane respiratory chain NADH dehydrogenase (Complex I) which catalyzes electron transfer from NADH through the respiratory chain, using ubiquinone as an electron acceptor. Essential for the catalytic activity and assembly of complex I. This Felis catus (Cat) protein is NADH-ubiquinone oxidoreductase chain 6 (MT-ND6).